The sequence spans 486 residues: Hexokinase-2 (486 aa).

At S15 the chain carries Phosphoserine. Residues 21 to 469 enclose the Hexokinase domain; that stretch reads KELMQQIENF…SGAGAAVIAA (449 aa). T38 is modified (phosphothreonine). The tract at residues 75 to 209 is hexokinase small subdomain; sequence TGKESGDFLA…NIPIEVVALI (135 aa). Residues 86–91 and K111 contribute to the ATP site; that span reads DLGGTN. S158 bears the Phosphoserine mark. Substrate is bound by residues S158, 175–176, 210–211, and N237; these read TK and ND. The segment at 210-458 is hexokinase large subdomain; the sequence is NDTTGTLVAS…YPIKIVPAED (249 aa). S245 carries the phosphoserine modification. Substrate is bound at residue E269. S272 carries the post-translational modification Phosphoserine. A substrate-binding site is contributed by E302. ATP is bound by residues 307 to 308, 344 to 348, and 419 to 423; these read GY, TSYPA, and SVYNR.

The protein belongs to the hexokinase family. In terms of assembly, homodimer.

It catalyses the reaction a D-hexose + ATP = a D-hexose 6-phosphate + ADP + H(+). The catalysed reaction is D-fructose + ATP = D-fructose 6-phosphate + ADP + H(+). It carries out the reaction D-glucose + ATP = D-glucose 6-phosphate + ADP + H(+). It participates in carbohydrate metabolism; hexose metabolism. Its pathway is carbohydrate degradation; glycolysis; D-glyceraldehyde 3-phosphate and glycerone phosphate from D-glucose: step 1/4. With respect to regulation, subject to allosteric control. Substrate inhibition by ATP. In terms of biological role, catalyzes the phosphorylation of hexose, such as D-glucose and D-fructose, to hexose 6-phosphate (D-glucose 6-phosphate and D-fructose 6-phosphate, respectively). Mediates the initial step of glycolysis by catalyzing phosphorylation of D-glucose to D-glucose 6-phosphate. This is Hexokinase-2 (HXK2) from Saccharomyces cerevisiae (strain ATCC 204508 / S288c) (Baker's yeast).